Reading from the N-terminus, the 874-residue chain is MIRTFATIANRGPGIRLATLAASRNLGYSSGGRISSVRIEKLRFSPFRSSTSLRYTSDIQHVMQEADSLDVNNSVSNTGVLDYDRKNAVVLYFDHIYPFSVSRYSWKQYFTLLFPVNRCSEDDIRERVMNLSSTEKEPLPKDVRILELVPMRRDGGVFVKFQLPATMSARELVGLICQNTKENEQAYGERFLVGPLNKIWNHFPRCFQVKGTPWIEDLRRFPSVKLSVKFEGERLTEEELYVLFRRYGLIIDIAPGSGTEPAVIHFRKIRSAICAKNCVTGITLNSGNTVVHIQYLPLKRVNYITDFIGNHQRIAIPIILALLATAAVFIFDPIREWFIMQNVSHRHALDSYKDNKFLKLVSLPYEQVRRWIDSGYDYFDSKFGCDEEDEFGGEKGEAPNDLWSERYEKVKQLKLWIYENINTFIIVRGPKGSGKEELVLEHTLRDDPILGNKLLYIDCEALVKSRSDNALIEATAQQLGYFPVFTWTNSISQFVDLGVQGLTGQKSGLSESKETQLKNMFGLTSSAIRKLALQDYAKYKKSVLRQRRRQQGDSTSEDILSEDEYLSQHPERKPVIVIDKFAGRADGDQDFIFKMISEWSAQLVQSNLAHVIILTHDVGSMSHLTSALPNQVMKSISLSDASQRSARHYVLNQLNKESQAQVNELDSCLEPLGGRMLDLQAFVRRMRSGEAPGDALEEMVSQASEQITTFFLSASSTQNSWSTAQVWLLIKLLAKQESISYETLCHDPLFKSPDSLSILSTLEKHDLISLISDKGVLNTVSTGRPLYKAAFRSLVEDPKIFRIYEEDLYNKLIALENAKIAKLEDEFAKLASVDARLVRNRLDYVSNKIVASTDKITDYEEKISGLSSKKSSWF.

Residues 1-55 (MIRTFATIANRGPGIRLATLAASRNLGYSSGGRISSVRIEKLRFSPFRSSTSLRY) constitute a mitochondrion transit peptide. Topologically, residues 56–313 (TSDIQHVMQE…ITDFIGNHQR (258 aa)) are mitochondrial matrix. The 74-residue stretch at 224–297 (VKLSVKFEGE…NTVVHIQYLP (74 aa)) folds into the RRM domain. A helical transmembrane segment spans residues 314-334 (IAIPIILALLATAAVFIFDPI). The Mitochondrial intermembrane segment spans residues 335–874 (REWFIMQNVS…GLSSKKSSWF (540 aa)). A disordered region spans residues 547 to 566 (RRRQQGDSTSEDILSEDEYL). Residues 555–565 (TSEDILSEDEY) show a composition bias toward acidic residues.

It belongs to the YME2 family.

The protein resides in the mitochondrion inner membrane. Functionally, plays a role in maintaining the mitochondrial genome and in controlling the mtDNA escape. Involved in the regulation of mtDNA nucleotide structure and number. May have a dispensable role in early maturation of pre-rRNA. The chain is Mitochondrial escape protein 2 (YME2) from Meyerozyma guilliermondii (strain ATCC 6260 / CBS 566 / DSM 6381 / JCM 1539 / NBRC 10279 / NRRL Y-324) (Yeast).